The primary structure comprises 163 residues: Nucleotide-binding protein Bcer98_0876 (163 aa).

The protein belongs to the YajQ family.

Its function is as follows. Nucleotide-binding protein. The chain is Nucleotide-binding protein Bcer98_0876 from Bacillus cytotoxicus (strain DSM 22905 / CIP 110041 / 391-98 / NVH 391-98).